The following is an 86-amino-acid chain: Large ribosomal subunit protein uL23 (86 aa).

It belongs to the universal ribosomal protein uL23 family. As to quaternary structure, part of the 50S ribosomal subunit. Contacts protein L29.

Its function is as follows. Binds to 23S rRNA. One of the proteins that surrounds the polypeptide exit tunnel on the outside of the ribosome. This chain is Large ribosomal subunit protein uL23, found in Pyrococcus furiosus (strain ATCC 43587 / DSM 3638 / JCM 8422 / Vc1).